The sequence spans 46 residues: GPSSCKADEEPCEYHADCCNCCLSGICAPSTNWILPGCSTSSFFKI.

A 4-hydroxyproline mark is found at Pro2 and Pro11. Cystine bridges form between Cys5/Cys19, Cys12/Cys22, Cys18/Cys27, and Cys21/Cys38. Position 29 is a 4-hydroxyproline (Pro29). 6'-bromotryptophan is present on Trp33. Phe44 carries the D-phenylalanine modification.

The protein belongs to the conotoxin I1 superfamily. In terms of tissue distribution, expressed by the venom duct.

It localises to the secreted. Iota-conotoxins bind to voltage-gated sodium channels (Nav) and act as agonists by shifting the voltage-dependence of activation to more hyperpolarized levels. Produces general excitatory symptoms. This is Iota-conotoxin-like Fi11.8 from Conus figulinus (Fig cone).